The following is a 699-amino-acid chain: MEVHELFRYFRMPELIDIRQYVRTLPTNTLMGFGAFAALTTFWYATRPKALKPPCDLSMQSVEIAGTTDGIRRSAVLEDDKLLVYYYDDVRTMYDGFQRGIQVSNNGPCLGSRKPNQPYEWISYKEVAELAECIGSGLIQKGFKPCSEQFIGLFSQNRPEWVIVEQGCFSYSMVVVPLYDTLGADAITYIVNKAELSVIFADKPEKAKLLLEGVENKLTPCLKIIVIMDSYGSDLVERGKKCGVEIISLKALEDLGRVNRVKPKPPEPEDLAIICFTSGTTGNPKGAMITHQNIINDCSGFIKATESAFIASTDDVLISFLPLAHMFETVVECVMLCHGAKIGFFQGDIRLLMDDLKVLQPTIFPVVPRLLNRMFDRIFGQANTSLKRWLLDFASKRKEAELRSGIVRNNSLWDKLIFHKIQSSLGGKVRLMITGAAPVSATVLTFLRTALGCQFYEGYGQTECTAGCCLSLPGDWTAGHVGAPMPCNYVKLVDVEEMNYLASKGEGEVCVKGANVFKGYLKDPARTAEALDKDGWLHTGDIGKWLPNGTLKIIDRKKHIFKLAQGEYIAPEKIENIYLRSEAVAQVFVHGESLQAFLIAVVVPDVESLPSWAQKRGLQGSFEELCRNKDINKAILDDLLKLGKEAGLKPFEQVKGIAVHPELFSIDNGLLTPTLKAKRPELRNYFRSQIDELYATIKI.

N-acetylmethionine is present on Met1. Tyr9 is subject to 3'-nitrotyrosine. The helical; Signal-anchor for type III membrane protein transmembrane segment at 25–45 (LPTNTLMGFGAFAALTTFWYA) threads the bilayer. Residues 46 to 699 (TRPKALKPPC…IDELYATIKI (654 aa)) lie on the Cytoplasmic side of the membrane. Tyr85 bears the Phosphotyrosine mark. The residue at position 86 (Tyr86) is a 3'-nitrotyrosine. O-linked (GlcNAc) serine glycosylation occurs at Ser136. Residues Lys208, Lys357, and Lys387 each carry the N6-acetyllysine modification. Ser621 bears the Phosphoserine mark. The residue at position 633 (Lys633) is an N6-acetyllysine.

It belongs to the ATP-dependent AMP-binding enzyme family. Mg(2+) is required as a cofactor.

The protein localises to the mitochondrion outer membrane. It localises to the peroxisome membrane. The protein resides in the microsome membrane. It is found in the endoplasmic reticulum membrane. It catalyses the reaction a long-chain fatty acid + ATP + CoA = a long-chain fatty acyl-CoA + AMP + diphosphate. The catalysed reaction is (5Z,8Z,11Z,14Z)-eicosatetraenoate + ATP + CoA = (5Z,8Z,11Z,14Z)-eicosatetraenoyl-CoA + AMP + diphosphate. The enzyme catalyses 3,7,11,15-tetramethylhexadecanoate + ATP + CoA = phytanoyl-CoA + AMP + diphosphate. It carries out the reaction hexadecanoate + ATP + CoA = hexadecanoyl-CoA + AMP + diphosphate. It catalyses the reaction (E)-hexadec-2-enoate + ATP + CoA = (2E)-hexadecenoyl-CoA + AMP + diphosphate. The catalysed reaction is 2,6,10,14-tetramethylpentadecanoate + ATP + CoA = pristanoyl-CoA + AMP + diphosphate. The enzyme catalyses 14,15-epoxy-(5Z,8Z,11Z)-eicosatrienoate + ATP + CoA = 14,15-epoxy-(5Z,8Z,11Z)-eicosatrienoyl-CoA + AMP + diphosphate. It carries out the reaction 5-hydroxy-(6E,8Z,11Z,14Z)-eicosatetraenoate + ATP + CoA = 5-hydroxy-(6E,8Z,11Z,14Z)-eicosatetraenoyl-CoA + AMP + diphosphate. It catalyses the reaction 12-hydroxy-(5Z,8Z,10E,14Z)-eicosatetraenoate + ATP + CoA = 12-hydroxy-(5Z,8Z,10E,14Z)-eicosatetraenoyl-CoA + AMP + diphosphate. The catalysed reaction is 15-hydroxy-(5Z,8Z,11Z,13E)-eicosatetraenoate + ATP + CoA = 15-hydroxy-(5Z,8Z,11Z,13E)-eicosatetraenoyl-CoA + AMP + diphosphate. The enzyme catalyses (9Z)-octadecenoate + ATP + CoA = (9Z)-octadecenoyl-CoA + AMP + diphosphate. Its activity is regulated as follows. Inhibited at high temperature and by arachidonate. Functionally, catalyzes the conversion of long-chain fatty acids to their active form acyl-CoAs for both synthesis of cellular lipids, and degradation via beta-oxidation. Preferentially uses palmitoleate, oleate and linoleate. Preferentially activates arachidonate than epoxyeicosatrienoic acids (EETs) or hydroxyeicosatrienoic acids (HETEs). In Mus musculus (Mouse), this protein is Long-chain-fatty-acid--CoA ligase 1.